The chain runs to 567 residues: DNA ligase B (567 aa).

Lys-126 serves as the catalytic N6-AMP-lysine intermediate.

This sequence belongs to the NAD-dependent DNA ligase family. LigB subfamily.

The catalysed reaction is NAD(+) + (deoxyribonucleotide)n-3'-hydroxyl + 5'-phospho-(deoxyribonucleotide)m = (deoxyribonucleotide)n+m + AMP + beta-nicotinamide D-nucleotide.. Catalyzes the formation of phosphodiester linkages between 5'-phosphoryl and 3'-hydroxyl groups in double-stranded DNA using NAD as a coenzyme and as the energy source for the reaction. This is DNA ligase B from Pseudomonas putida (strain W619).